Consider the following 231-residue polypeptide: 7-cyano-7-deazaguanine synthase (231 aa).

8–18 (FSGGQDSTTCL) provides a ligand contact to ATP. Residues C188, C197, C200, and C203 each coordinate Zn(2+).

It belongs to the QueC family. The cofactor is Zn(2+).

It carries out the reaction 7-carboxy-7-deazaguanine + NH4(+) + ATP = 7-cyano-7-deazaguanine + ADP + phosphate + H2O + H(+). It functions in the pathway purine metabolism; 7-cyano-7-deazaguanine biosynthesis. Catalyzes the ATP-dependent conversion of 7-carboxy-7-deazaguanine (CDG) to 7-cyano-7-deazaguanine (preQ(0)). This chain is 7-cyano-7-deazaguanine synthase, found in Escherichia coli O157:H7.